Here is a 357-residue protein sequence, read N- to C-terminus: Homeobox protein HMX3 (357 aa).

Disordered stretches follow at residues Met-1–Pro-58 and Leu-129–Lys-229. A compositionally biased stretch (pro residues) spans Pro-16–Lys-27. 2 stretches are compositionally biased toward basic and acidic residues: residues Pro-130 to Leu-140 and Thr-149 to Asp-173. 2 positions are modified to phosphoserine: Ser-153 and Ser-180. The segment covering Ala-191–Ala-209 has biased composition (low complexity). Residues Glu-210–Pro-223 are compositionally biased toward basic and acidic residues. A DNA-binding region (homeobox) is located at residues Lys-227 to Leu-286.

The protein belongs to the HMX homeobox family.

The protein localises to the nucleus. Its function is as follows. Transcription factor involved in specification of neuronal cell types and which is required for inner ear and hypothalamus development. Binds to the 5'-CAAGTG-3' core sequence. Controls semicircular canal formation in the inner ear. Also required for hypothalamic/pituitary axis of the CNS. The polypeptide is Homeobox protein HMX3 (HMX3) (Homo sapiens (Human)).